The chain runs to 139 residues: MRSFEFFEHTADVGIRAYGKSLEEAFSNAALGVFEVITDTSKVKPIEYREIYLNGYDLENLLYKWIEELLYYYDSELMVFSKFDLMIDQDSMTLEGKAWGEKFNGKIHERRTVVKAMTYHQLSIEKTENGYVITFVVDI.

Positions 12, 138, and 139 each coordinate Ca(2+).

The protein belongs to the archease family.

Functionally, activates the tRNA-splicing ligase complex by facilitating the enzymatic turnover of catalytic subunit RtcB. Acts by promoting the guanylylation of RtcB, a key intermediate step in tRNA ligation. Can also alter the NTP specificity of RtcB such that ATP, dGTP or ITP is used efficiently. This chain is Protein archease, found in Saccharolobus islandicus (strain M.16.27) (Sulfolobus islandicus).